A 110-amino-acid polypeptide reads, in one-letter code: UPF0367 protein Syncc9605_2376 (110 aa).

This sequence belongs to the UPF0367 family.

The chain is UPF0367 protein Syncc9605_2376 from Synechococcus sp. (strain CC9605).